The chain runs to 336 residues: 4-hydroxy-3-methylbut-2-enyl diphosphate reductase (336 aa).

[4Fe-4S] cluster is bound at residue Cys-37. (2E)-4-hydroxy-3-methylbut-2-enyl diphosphate is bound by residues His-66 and His-99. Residues His-66 and His-99 each contribute to the dimethylallyl diphosphate site. The isopentenyl diphosphate site is built by His-66 and His-99. Cys-121 provides a ligand contact to [4Fe-4S] cluster. His-149 contributes to the (2E)-4-hydroxy-3-methylbut-2-enyl diphosphate binding site. His-149 contributes to the dimethylallyl diphosphate binding site. His-149 is a binding site for isopentenyl diphosphate. The Proton donor role is filled by Glu-151. A (2E)-4-hydroxy-3-methylbut-2-enyl diphosphate-binding site is contributed by Thr-189. A [4Fe-4S] cluster-binding site is contributed by Cys-219. Positions 247, 248, 249, and 292 each coordinate (2E)-4-hydroxy-3-methylbut-2-enyl diphosphate. Ser-247, Ser-248, Asn-249, and Ser-292 together coordinate dimethylallyl diphosphate. The isopentenyl diphosphate site is built by Ser-247, Ser-248, Asn-249, and Ser-292.

This sequence belongs to the IspH family. It depends on [4Fe-4S] cluster as a cofactor.

It catalyses the reaction isopentenyl diphosphate + 2 oxidized [2Fe-2S]-[ferredoxin] + H2O = (2E)-4-hydroxy-3-methylbut-2-enyl diphosphate + 2 reduced [2Fe-2S]-[ferredoxin] + 2 H(+). The enzyme catalyses dimethylallyl diphosphate + 2 oxidized [2Fe-2S]-[ferredoxin] + H2O = (2E)-4-hydroxy-3-methylbut-2-enyl diphosphate + 2 reduced [2Fe-2S]-[ferredoxin] + 2 H(+). The protein operates within isoprenoid biosynthesis; dimethylallyl diphosphate biosynthesis; dimethylallyl diphosphate from (2E)-4-hydroxy-3-methylbutenyl diphosphate: step 1/1. Its pathway is isoprenoid biosynthesis; isopentenyl diphosphate biosynthesis via DXP pathway; isopentenyl diphosphate from 1-deoxy-D-xylulose 5-phosphate: step 6/6. In terms of biological role, catalyzes the conversion of 1-hydroxy-2-methyl-2-(E)-butenyl 4-diphosphate (HMBPP) into a mixture of isopentenyl diphosphate (IPP) and dimethylallyl diphosphate (DMAPP). Acts in the terminal step of the DOXP/MEP pathway for isoprenoid precursor biosynthesis. In Nocardia farcinica (strain IFM 10152), this protein is 4-hydroxy-3-methylbut-2-enyl diphosphate reductase.